We begin with the raw amino-acid sequence, 323 residues long: Putative dTDP-D-glucose 4,6-dehydratase (323 aa).

T124 contacts substrate. D125 functions as the Proton donor in the catalytic mechanism. Residues E126 and Y149 each act as proton acceptor in the active site.

Belongs to the NAD(P)-dependent epimerase/dehydratase family. dTDP-glucose dehydratase subfamily. It depends on NAD(+) as a cofactor.

It catalyses the reaction dTDP-alpha-D-glucose = dTDP-4-dehydro-6-deoxy-alpha-D-glucose + H2O. In Acanthamoeba polyphaga mimivirus (APMV), this protein is Putative dTDP-D-glucose 4,6-dehydratase.